We begin with the raw amino-acid sequence, 636 residues long: Threonine--tRNA ligase (636 aa).

Residues 1 to 61 enclose the TGS domain; that stretch reads MINITLPDDS…RNDCAVRLIT (61 aa). The tract at residues 238-528 is catalytic; sequence DHRKIGTRMG…LVEHFAGKFP (291 aa). Zn(2+) contacts are provided by Cys-329, His-380, and His-505.

Belongs to the class-II aminoacyl-tRNA synthetase family. As to quaternary structure, homodimer. The cofactor is Zn(2+).

It localises to the cytoplasm. It carries out the reaction tRNA(Thr) + L-threonine + ATP = L-threonyl-tRNA(Thr) + AMP + diphosphate + H(+). Catalyzes the attachment of threonine to tRNA(Thr) in a two-step reaction: L-threonine is first activated by ATP to form Thr-AMP and then transferred to the acceptor end of tRNA(Thr). Also edits incorrectly charged L-seryl-tRNA(Thr). In Desulforapulum autotrophicum (strain ATCC 43914 / DSM 3382 / VKM B-1955 / HRM2) (Desulfobacterium autotrophicum), this protein is Threonine--tRNA ligase.